A 433-amino-acid polypeptide reads, in one-letter code: Probable M18 family aminopeptidase 2 (433 aa).

His-79, His-153, and His-404 together coordinate Zn(2+).

Belongs to the peptidase M18 family. Requires Zn(2+) as cofactor.

The sequence is that of Probable M18 family aminopeptidase 2 (apeB) from Mycobacterium bovis (strain ATCC BAA-935 / AF2122/97).